Reading from the N-terminus, the 261-residue chain is MNSTQRFEHKVVIVTGAAQGIGRGVALRIAQEGGCLILADRSDLIQAVLAEIKALGALAIAVETDLETYAGAELVVSHAIAEYGRIDVLINNVGGAIWMKPFQEFSEEEIIQEVHRSLFPALWCCRAVLPEMLKHQQGTIVNVSSIATRGIHRIPYSASKGGVNALTASLAFEHAQHGIRVNAVATGGTKAPPRKIPRNAQPLSKSEQVWMQQVVDQTIDRSFLGRYGSIDEQVNAITFLASDESSYITGSVLPVGGGDQG.

13–37 (IVTGAAQGIGRGVALRIAQEGGCLI) serves as a coordination point for NAD(+). Position 145 (serine 145) interacts with substrate. Tyrosine 156 serves as the catalytic Proton acceptor.

Belongs to the short-chain dehydrogenases/reductases (SDR) family. As to quaternary structure, homodimer.

The enzyme catalyses (1R,6S)-1,6-dihydroxycyclohexa-2,4-diene-1-carboxylate + NAD(+) = catechol + CO2 + NADH. The protein operates within aromatic compound metabolism; benzoate degradation via hydroxylation; catechol from benzoate: step 2/2. Its function is as follows. Degradation of 2-hydro-1,2-dihydroxy benzoate (DHB) to catechol. The sequence is that of 1,6-dihydroxycyclohexa-2,4-diene-1-carboxylate dehydrogenase (benD) from Acinetobacter baylyi (strain ATCC 33305 / BD413 / ADP1).